Reading from the N-terminus, the 509-residue chain is 2-isopropylmalate synthase (509 aa).

The Pyruvate carboxyltransferase domain maps to 4 to 266 (VRIFDTTLRD…YTGIKTEEIY (263 aa)). The Mn(2+) site is built by Asp-13, His-201, His-203, and Asn-237. The interval 390-509 (TLDYFHISTG…FDYQAKGEKQ (120 aa)) is regulatory domain.

The protein belongs to the alpha-IPM synthase/homocitrate synthase family. LeuA type 1 subfamily. Homodimer. Mn(2+) is required as a cofactor.

The protein resides in the cytoplasm. It carries out the reaction 3-methyl-2-oxobutanoate + acetyl-CoA + H2O = (2S)-2-isopropylmalate + CoA + H(+). The protein operates within amino-acid biosynthesis; L-leucine biosynthesis; L-leucine from 3-methyl-2-oxobutanoate: step 1/4. Catalyzes the condensation of the acetyl group of acetyl-CoA with 3-methyl-2-oxobutanoate (2-ketoisovalerate) to form 3-carboxy-3-hydroxy-4-methylpentanoate (2-isopropylmalate). The chain is 2-isopropylmalate synthase from Carboxydothermus hydrogenoformans (strain ATCC BAA-161 / DSM 6008 / Z-2901).